Here is a 736-residue protein sequence, read N- to C-terminus: Meiotic expression up-regulated protein 27 (736 aa).

It belongs to the UPF0300 family.

This is Meiotic expression up-regulated protein 27 (meu27) from Schizosaccharomyces pombe (strain 972 / ATCC 24843) (Fission yeast).